We begin with the raw amino-acid sequence, 299 residues long: tRNA dimethylallyltransferase (299 aa).

Position 13–20 (13–20 (GPTASGKT)) interacts with ATP. Residue 15-20 (TASGKT) participates in substrate binding. Positions 38 to 41 (DSRQ) are interaction with substrate tRNA.

Belongs to the IPP transferase family. In terms of assembly, monomer. Mg(2+) is required as a cofactor.

It carries out the reaction adenosine(37) in tRNA + dimethylallyl diphosphate = N(6)-dimethylallyladenosine(37) in tRNA + diphosphate. Its function is as follows. Catalyzes the transfer of a dimethylallyl group onto the adenine at position 37 in tRNAs that read codons beginning with uridine, leading to the formation of N6-(dimethylallyl)adenosine (i(6)A). The sequence is that of tRNA dimethylallyltransferase from Parasynechococcus marenigrum (strain WH8102).